A 328-amino-acid polypeptide reads, in one-letter code: Ribosomal protein L11 methyltransferase (328 aa).

The S-adenosyl-L-methionine site is built by T153, G174, D196, and N263.

Belongs to the methyltransferase superfamily. PrmA family.

The protein localises to the cytoplasm. It catalyses the reaction L-lysyl-[protein] + 3 S-adenosyl-L-methionine = N(6),N(6),N(6)-trimethyl-L-lysyl-[protein] + 3 S-adenosyl-L-homocysteine + 3 H(+). Methylates ribosomal protein L11. The protein is Ribosomal protein L11 methyltransferase of Chloroflexus aurantiacus (strain ATCC 29366 / DSM 635 / J-10-fl).